Reading from the N-terminus, the 545-residue chain is Chaperonin GroEL (545 aa).

ATP is bound by residues 30–33 (TLGP), lysine 51, 87–91 (DGTTT), glycine 415, and aspartate 496.

Belongs to the chaperonin (HSP60) family. Forms a cylinder of 14 subunits composed of two heptameric rings stacked back-to-back. Interacts with the co-chaperonin GroES.

It localises to the cytoplasm. It catalyses the reaction ATP + H2O + a folded polypeptide = ADP + phosphate + an unfolded polypeptide.. In terms of biological role, together with its co-chaperonin GroES, plays an essential role in assisting protein folding. The GroEL-GroES system forms a nano-cage that allows encapsulation of the non-native substrate proteins and provides a physical environment optimized to promote and accelerate protein folding. This chain is Chaperonin GroEL, found in Haemophilus influenzae (strain 86-028NP).